Reading from the N-terminus, the 118-residue chain is Cell division protein SepF (118 aa).

Residues 1–12 (MGIMSKILGGGG) form an important for localization in a ring-like structure at midcell region.

As to quaternary structure, homodimer. Does not oligomerize. Interacts with FtsZ2.

The protein localises to the cytoplasm. Functionally, involved in cell division. Probably acts as a membrane anchor for FstZ2, tethering its filaments to the division site. May be involved in septum closure. This is Cell division protein SepF from Haloferax volcanii (strain ATCC 29605 / DSM 3757 / JCM 8879 / NBRC 14742 / NCIMB 2012 / VKM B-1768 / DS2) (Halobacterium volcanii).